The primary structure comprises 446 residues: 3-phosphoshikimate 1-carboxyvinyltransferase (446 aa).

3-phosphoshikimate-binding residues include lysine 30, serine 31, and arginine 35. Position 30 (lysine 30) interacts with phosphoenolpyruvate. Glycine 112 and arginine 140 together coordinate phosphoenolpyruvate. Serine 186, serine 187, glutamine 188, serine 215, glutamate 334, and histidine 361 together coordinate 3-phosphoshikimate. Glutamine 188 serves as a coordination point for phosphoenolpyruvate. Glutamate 334 functions as the Proton acceptor in the catalytic mechanism. Phosphoenolpyruvate-binding residues include arginine 365, arginine 406, and lysine 431.

It belongs to the EPSP synthase family. As to quaternary structure, monomer.

It localises to the cytoplasm. The catalysed reaction is 3-phosphoshikimate + phosphoenolpyruvate = 5-O-(1-carboxyvinyl)-3-phosphoshikimate + phosphate. It participates in metabolic intermediate biosynthesis; chorismate biosynthesis; chorismate from D-erythrose 4-phosphate and phosphoenolpyruvate: step 6/7. Its function is as follows. Catalyzes the transfer of the enolpyruvyl moiety of phosphoenolpyruvate (PEP) to the 5-hydroxyl of shikimate-3-phosphate (S3P) to produce enolpyruvyl shikimate-3-phosphate and inorganic phosphate. The sequence is that of 3-phosphoshikimate 1-carboxyvinyltransferase from Streptomyces avermitilis (strain ATCC 31267 / DSM 46492 / JCM 5070 / NBRC 14893 / NCIMB 12804 / NRRL 8165 / MA-4680).